Reading from the N-terminus, the 397-residue chain is 1-deoxy-D-xylulose 5-phosphate reductoisomerase (397 aa).

Residues Thr-10, Gly-11, Ser-12, Ile-13, Gly-36, Asn-38, and Asn-128 each coordinate NADPH. Residue Lys-129 participates in 1-deoxy-D-xylulose 5-phosphate binding. Residue Glu-130 participates in NADPH binding. Asp-154 lines the Mn(2+) pocket. 4 residues coordinate 1-deoxy-D-xylulose 5-phosphate: Ser-155, Glu-156, Ser-180, and His-203. Residue Glu-156 participates in Mn(2+) binding. Position 209 (Gly-209) interacts with NADPH. The 1-deoxy-D-xylulose 5-phosphate site is built by Asn-221, Lys-222, and Glu-225. Glu-225 lines the Mn(2+) pocket.

Belongs to the DXR family. Mg(2+) serves as cofactor. It depends on Mn(2+) as a cofactor.

The enzyme catalyses 2-C-methyl-D-erythritol 4-phosphate + NADP(+) = 1-deoxy-D-xylulose 5-phosphate + NADPH + H(+). Its pathway is isoprenoid biosynthesis; isopentenyl diphosphate biosynthesis via DXP pathway; isopentenyl diphosphate from 1-deoxy-D-xylulose 5-phosphate: step 1/6. Its function is as follows. Catalyzes the NADPH-dependent rearrangement and reduction of 1-deoxy-D-xylulose-5-phosphate (DXP) to 2-C-methyl-D-erythritol 4-phosphate (MEP). This is 1-deoxy-D-xylulose 5-phosphate reductoisomerase from Solibacter usitatus (strain Ellin6076).